A 375-amino-acid polypeptide reads, in one-letter code: uncharacterized protein (375 aa).

Positions 54–78 (EGIPPPTQSQEPLKPQENISRPIHH) are disordered.

This is an uncharacterized protein from Bos taurus (Bovine).